The following is a 744-amino-acid chain: Leucine-rich repeat extensin-like protein 1 (744 aa).

The signal sequence occupies residues 1 to 26; sequence MLFPPLRSLFLFTLLLSSVCFLQIKA. N-linked (GlcNAc...) asparagine glycosylation is found at N71 and N77. LRR repeat units lie at residues 122–145, 147–170, 171–194, 196–217, 219–240, 241–265, 266–289, 290–313, and 315–336; these read LSDL…TFNR, KLLY…VLSL, PSLK…LFDR, LDAI…MGNS, VSAL…IGQM, GKTL…IGNL, KKVT…VGNM, KSLE…ICQL, and NLEN…CAAS. N253 carries an N-linked (GlcNAc...) asparagine glycan. N-linked (GlcNAc...) asparagine glycosylation is found at N318 and N344. Residues 381–404 form an LRR 10 repeat; that stretch reads FSPPPPTFKMSPEVRTLPPPIYVY. Residues 382–744 are contains the Ser-Pro(4) repeats; sequence SPPPPTFKMS…ASPPPPPSYY (363 aa). Disordered stretches follow at residues 408–445, 518–537, 555–576, and 658–744; these read PPPP…PPPP, VYSS…PESS, PSPV…VYYP, and PPPS…PSYY. The span at 430-439 shows a compositional bias: low complexity; it reads SKMSPSVRAY. Residues 704–729 are compositionally biased toward pro residues; that stretch reads YEPPPEYSYSSSPPPPSPTSYFPPMP.

Post-translationally, hydroxylated on proline residues in the S-P-P-P-P repeat. In terms of processing, O-glycosylated on hydroxyprolines. In terms of tissue distribution, expressed in root hair cells (at protein level).

It localises to the secreted. Its subcellular location is the cell wall. Modulates cell morphogenesis by regulating cell wall formation and assembly, and/or growth polarization. Together with LRX2, component of the extracellular mechanism regulating root hair morphogenesis and elongation. In Arabidopsis thaliana (Mouse-ear cress), this protein is Leucine-rich repeat extensin-like protein 1 (LRX1).